Consider the following 616-residue polypeptide: Chaperone protein HscA (616 aa).

The protein belongs to the heat shock protein 70 family.

Functionally, chaperone involved in the maturation of iron-sulfur cluster-containing proteins. Has a low intrinsic ATPase activity which is markedly stimulated by HscB. Involved in the maturation of IscU. The chain is Chaperone protein HscA from Escherichia coli (strain SMS-3-5 / SECEC).